Reading from the N-terminus, the 378-residue chain is Zinc transporter 7 (378 aa).

The Cytoplasmic portion of the chain corresponds to 1–37 (MLPLSIKDDEYKPPRLNLFRKMSGWFRSILADKTSRN). A helical membrane pass occupies residues 38–58 (LFFFLCLNLSFAFVELLYGVW). The Lumenal portion of the chain corresponds to 59–67 (SNSLGLISD). Residues 68–88 (SFHMFFDCTALLAGLAASVIS) form a helical membrane-spanning segment. Topologically, residues 89-102 (KWRSNDAFSYGYVR) are cytoplasmic. The helical transmembrane segment at 103–123 (AEVLAGFVNGLFLIFTAFFIF) threads the bilayer. Topologically, residues 124–140 (SEGVERALEPPDVHHER) are lumenal. Residues 141 to 161 (LLPVSILGFIVNLIGIFVFQH) traverse the membrane as a helical segment. The tract at residues 161 to 223 (HGGHGHSHGS…HGQDYCHDDH (63 aa)) is his-rich loop. The Cytoplasmic segment spans residues 162–238 (GGHGHSHGSG…TGSSKQILQG (77 aa)). The segment at 185-214 (HGHSHRGHGHSHEHKHGHTHDHGHSHGLSH) is disordered. Residues 186–211 (GHSHRGHGHSHEHKHGHTHDHGHSHG) show a composition bias toward basic residues. A helical membrane pass occupies residues 239–259 (VFLHIVADTLGSIGVIISAIL). At 260–264 (MQNYG) the chain is on the lumenal side. Residues 265 to 285 (LMIADPICSMLIALLIGVSIV) form a helical membrane-spanning segment. Residues 286–378 (PLLKESIGIL…LYIQIDVAAM (93 aa)) are Cytoplasmic-facing.

The protein belongs to the cation diffusion facilitator (CDF) transporter (TC 2.A.4) family. SLC30A subfamily. As to quaternary structure, homooligomer.

The protein localises to the golgi apparatus membrane. It is found in the cytoplasmic vesicle. The protein resides in the golgi apparatus. It localises to the trans-Golgi network. Its subcellular location is the sarcoplasmic reticulum. The protein localises to the mitochondrion. The catalysed reaction is Zn(2+)(in) = Zn(2+)(out). Functionally, zinc ion transporter mediating zinc entry from the cytosol into the lumen of organelles along the secretory pathway. By contributing to zinc ion homeostasis within the early secretory pathway, regulates the activation and folding of enzymes like alkaline phosphatases. This is Zinc transporter 7 (SLC30A7) from Gallus gallus (Chicken).